The chain runs to 150 residues: MAKNTVSARFRKVDVDEYDENKFVDEEEAGEGQQGPDEGEVDSAIRGGNMMGALQAVLKNPPINTKNQSAKDQAEHLVLKVLISFKANEIEKAVQSLDKNSMDLLMKYIYKGFESPSDNSSAVLLQWHEKALAVAGVGSIVRVLTARKTV.

A disordered region spans residues 21–45 (NKFVDEEEAGEGQQGPDEGEVDSAI).

Belongs to the ARPC5 family. Component of the Arp2/3 complex composed of actr2/arp2, actr3/arp3, arpc1 (arpc1a or arpc1b), arpc2, arpc3, arpc4 and arpc5.

It localises to the cytoplasm. The protein resides in the cytoskeleton. Its subcellular location is the cell projection. It is found in the nucleus. In terms of biological role, component of the Arp2/3 complex, a multiprotein complex that mediates actin polymerization upon stimulation by nucleation-promoting factor (NPF). The Arp2/3 complex mediates the formation of branched actin networks in the cytoplasm, providing the force for cell motility. In addition to its role in the cytoplasmic cytoskeleton, the Arp2/3 complex also promotes actin polymerization in the nucleus, thereby regulating gene transcription and repair of damaged DNA. The Arp2/3 complex promotes homologous recombination (HR) repair in response to DNA damage by promoting nuclear actin polymerization, leading to drive motility of double-strand breaks (DSBs). This chain is Actin-related protein 2/3 complex subunit 5-C (arpc5-c), found in Xenopus laevis (African clawed frog).